We begin with the raw amino-acid sequence, 960 residues long: Pentatricopeptide repeat-containing protein At3g63370, chloroplastic (960 aa).

Residues 1–64 (MEYAVTNMRL…PKLACFDGVL (64 aa)) constitute a chloroplast transit peptide. 20 PPR repeats span residues 79 to 109 (PVEA…IFKT), 115 to 145 (LDFL…MPDR), 146 to 180 (TAFA…GVPL), 181 to 215 (GLSS…GYHS), 216 to 246 (TGFI…FQEK), 248 to 282 (DAVL…GPAP), 283 to 317 (NSYT…STHS), 319 to 349 (ELYV…MNNA), 350 to 384 (DVVT…GHKS), 385 to 419 (DEVS…GWDS), 420 to 450 (NLQV…MHDK), 451 to 485 (DLIS…RMEI), 486 to 516 (DEMI…ILRK), 520 to 550 (DTVI…IKGK), 551 to 585 (DVVS…GLSA), 586 to 620 (DSVA…GFCL), 621 to 651 (EGSI…IERK), 652 to 686 (GLLQ…NVSP), 687 to 717 (DHIS…MEHE), and 723 to 753 (WPEH…MKTE). A type E motif region spans residues 758-833 (VWCALLAACR…HPGCSWIEMD (76 aa)). Residues 834 to 864 (GKVHKFTARDKSHPESKEIYEKLSEVTRKLE) form a type E(+) motif region. The segment at 865-960 (REVGYVADTK…SGLCSCGDSW (96 aa)) is type DYW motif.

It belongs to the PPR family. PCMP-H subfamily.

It is found in the plastid. The protein localises to the chloroplast. Functionally, involved in RNA editing event in chloroplasts. Required for the editing of a single site in rps14 transcript. The sequence is that of Pentatricopeptide repeat-containing protein At3g63370, chloroplastic (PCMP-H83) from Arabidopsis thaliana (Mouse-ear cress).